The primary structure comprises 614 residues: Zinc metalloproteinase-disintegrin-like protein F1 (614 aa).

A signal peptide spans M1–S20. Residues I21 to P192 constitute a propeptide that is removed on maturation. Positions P167–T173 match the Cys-switch; controls maturation motif. E193 carries the post-translational modification Pyrrolidone carboxylic acid (Glu). Residues K202 to P398 form the Peptidase M12B domain. A glycan (N-linked (GlcNAc...) asparagine) is linked at N221. 3 disulfides stabilise this stretch: C313–C393, C353–C377, and C355–C360. Residue H338 participates in Zn(2+) binding. A Metal-binding motif is present at residues H338–D349. E339 functions as the Proton acceptor in the catalytic mechanism. Zn(2+)-binding residues include H342 and H348. Residues P406–N492 form the Disintegrin domain. Ca(2+) is bound by residues V408, N411, E415, E418, and D421. 14 disulfide bridges follow: C409/C438, C420/C433, C422/C428, C432/C455, C446/C452, C451/C477, C464/C484, C471/C503, C496/C508, C515/C565, C530/C575, C543/C553, C560/C601, and C595/C607. The short motif at E470–D472 is the D/ECD-tripeptide element. 3 residues coordinate Ca(2+): D472, E475, and D487. N534 carries N-linked (GlcNAc...) asparagine glycosylation.

Belongs to the venom metalloproteinase (M12B) family. P-III subfamily. P-IIIa sub-subfamily. As to quaternary structure, monomer. Zn(2+) is required as a cofactor. In terms of processing, N-glycosylated. Post-translationally, the N-terminus is blocked. Expressed by the venom gland (at protein level). Expressed by the venom gland.

The protein resides in the secreted. The alpha-fibrinogenase activity is inhibited by EDTA, but not by pefabloc. Zinc metalloprotease that has fibrinogenolytic activity. Does not have hemorrhagic activity in rats. Cleaves insulin B chain at '38-Ala-|-Leu-39' and '40-Tyr-|-Leu-41' bonds. Hydrolyzes only partially and weakly isolated extracellular matrix (ECM) bovine fibronectin and basal membrane (BM) protein human collagen IV in vitro. Murine laminin is not hydrolyzed, neither isolated nor in a solubilized BM preparation. Nidogen is hydrolyzed at '350-Ser-|-Phe-351' bond in a solubilized BM preparation. Hydrolyzes plasma proteins involved in blood coagulation in vitro. Has alpha-fibrinogenase activity cleaving human fibrinogen alpha chain at '432-Lys-|-Leu-433' bond, but does not cleave beta or gamma chains. Does not cleave fibrin. Hydrolyzes only partially bovine prothrombin at '200-Ser-|-Gly-201' bond, factor X (FX) heavy chain, and very slowly, FX light chain and plasminogen in vitro, without activating any of them. Has no effect in plasma thrombin generation. Does not inhibit platelet aggregation induced by collagen in vitro. May have a delayed pathological action as an anticoagulant in envenomed patients after they received serotherapy as it is not recognized by the venom antiserum. This chain is Zinc metalloproteinase-disintegrin-like protein F1, found in Vipera ammodytes ammodytes (Western sand viper).